Consider the following 535-residue polypeptide: Light-independent protochlorophyllide reductase subunit B (535 aa).

Aspartate 36 contributes to the [4Fe-4S] cluster binding site. Aspartate 287 acts as the Proton donor in catalysis. 422 to 423 (GL) is a binding site for substrate.

The protein belongs to the ChlB/BchB/BchZ family. As to quaternary structure, protochlorophyllide reductase is composed of three subunits; BchL, BchN and BchB. Forms a heterotetramer of two BchB and two BchN subunits. [4Fe-4S] cluster serves as cofactor.

The catalysed reaction is chlorophyllide a + oxidized 2[4Fe-4S]-[ferredoxin] + 2 ADP + 2 phosphate = protochlorophyllide a + reduced 2[4Fe-4S]-[ferredoxin] + 2 ATP + 2 H2O. Its pathway is porphyrin-containing compound metabolism; bacteriochlorophyll biosynthesis (light-independent). Component of the dark-operative protochlorophyllide reductase (DPOR) that uses Mg-ATP and reduced ferredoxin to reduce ring D of protochlorophyllide (Pchlide) to form chlorophyllide a (Chlide). This reaction is light-independent. The NB-protein (BchN-BchB) is the catalytic component of the complex. This is Light-independent protochlorophyllide reductase subunit B from Rhodopseudomonas palustris (strain BisB5).